Here is a 201-residue protein sequence, read N- to C-terminus: Dephospho-CoA kinase (201 aa).

The region spanning 2–201 (MIGLTGGIAS…KRWKVIPEDQ (200 aa)) is the DPCK domain. ATP is bound at residue 10-15 (ASGKSS).

The protein belongs to the CoaE family.

The protein resides in the cytoplasm. It catalyses the reaction 3'-dephospho-CoA + ATP = ADP + CoA + H(+). It functions in the pathway cofactor biosynthesis; coenzyme A biosynthesis; CoA from (R)-pantothenate: step 5/5. Its function is as follows. Catalyzes the phosphorylation of the 3'-hydroxyl group of dephosphocoenzyme A to form coenzyme A. The protein is Dephospho-CoA kinase of Halalkalibacterium halodurans (strain ATCC BAA-125 / DSM 18197 / FERM 7344 / JCM 9153 / C-125) (Bacillus halodurans).